The primary structure comprises 159 residues: Neuroglobin (159 aa).

The Globin domain maps to 3–151; sequence KLSSKDKELI…VVASMSRGWA (149 aa). 2 residues coordinate heme b: His66 and His98.

The protein belongs to the globin family. As to quaternary structure, monomer. Homodimers and homotetramers. Mainly monomeric but also detected as part of homodimers and homotetramers.

The protein localises to the cytoplasm. It localises to the cytosol. The protein resides in the mitochondrion matrix. The catalysed reaction is Fe(III)-heme b-[protein] + nitric oxide + H2O = Fe(II)-heme b-[protein] + nitrite + 2 H(+). Its function is as follows. Monomeric globin with a bis-histidyl six-coordinate heme-iron atom through which it can bind dioxygen, carbon monoxide and nitric oxide. Could help transport oxygen and increase its availability to the metabolically active neuronal tissues, though its low quantity in tissues as well as its high affinity for dioxygen, which may limit its oxygen-releasing ability, argue against it. The ferrous/deoxygenated form exhibits a nitrite reductase activity and it could produce nitric oxide which in turn inhibits cellular respiration in response to hypoxia. In its ferrous/deoxygenated state, it may also exhibit GDI (Guanine nucleotide Dissociation Inhibitor) activity toward heterotrimeric G-alpha proteins, thereby regulating signal transduction to facilitate neuroprotective responses in the wake of hypoxia and associated oxidative stress. This is Neuroglobin (ngb) from Tetraodon nigroviridis (Spotted green pufferfish).